The sequence spans 930 residues: Protein translocase subunit SecA (930 aa).

ATP-binding positions include Gln83, 101–105 (GEGKT), and Asp491.

The protein belongs to the SecA family. In terms of assembly, monomer and homodimer. Part of the essential Sec protein translocation apparatus which comprises SecA, SecYEG and auxiliary proteins SecDF. Other proteins may also be involved.

Its subcellular location is the cell inner membrane. The protein localises to the cellular thylakoid membrane. It is found in the cytoplasm. The enzyme catalyses ATP + H2O + cellular proteinSide 1 = ADP + phosphate + cellular proteinSide 2.. Its function is as follows. Part of the Sec protein translocase complex. Interacts with the SecYEG preprotein conducting channel. Has a central role in coupling the hydrolysis of ATP to the transfer of proteins into and across the cell membrane, serving as an ATP-driven molecular motor driving the stepwise translocation of polypeptide chains across the membrane. Probably participates in protein translocation into and across both the cytoplasmic and thylakoid membranes in cyanobacterial cells. The polypeptide is Protein translocase subunit SecA (Trichormus variabilis (strain ATCC 29413 / PCC 7937) (Anabaena variabilis)).